The following is a 62-amino-acid chain: Photosystem II reaction center protein Z (62 aa).

2 consecutive transmembrane segments (helical) span residues 8–28 (FLIALVLFSLLMVIGVPVAYA) and 41–61 (YVGSAIWAILVVAVAILNFLV).

It belongs to the PsbZ family. PSII is composed of 1 copy each of membrane proteins PsbA, PsbB, PsbC, PsbD, PsbE, PsbF, PsbH, PsbI, PsbJ, PsbK, PsbL, PsbM, PsbT, PsbX, PsbY, PsbZ, Psb30/Ycf12, peripheral proteins PsbO, CyanoQ (PsbQ), PsbU, PsbV and a large number of cofactors. It forms dimeric complexes.

It is found in the cellular thylakoid membrane. May control the interaction of photosystem II (PSII) cores with the light-harvesting antenna, regulates electron flow through the 2 photosystem reaction centers. PSII is a light-driven water plastoquinone oxidoreductase, using light energy to abstract electrons from H(2)O, generating a proton gradient subsequently used for ATP formation. The sequence is that of Photosystem II reaction center protein Z from Microcystis aeruginosa (strain NIES-843 / IAM M-2473).